A 673-amino-acid chain; its full sequence is DNA ligase (673 aa).

Residues 33-37, 83-84, and Glu117 each bind NAD(+); these read DHQYD and SL. Catalysis depends on Lys119, which acts as the N6-AMP-lysine intermediate. The NAD(+) site is built by Arg140, Glu175, Lys282, and Lys306. Positions 400, 403, 418, and 424 each coordinate Zn(2+). Positions 592–673 constitute a BRCT domain; it reads RGSSAISGKT…WVKMVEDARS (82 aa).

Belongs to the NAD-dependent DNA ligase family. LigA subfamily. The cofactor is Mg(2+). Mn(2+) serves as cofactor.

The enzyme catalyses NAD(+) + (deoxyribonucleotide)n-3'-hydroxyl + 5'-phospho-(deoxyribonucleotide)m = (deoxyribonucleotide)n+m + AMP + beta-nicotinamide D-nucleotide.. DNA ligase that catalyzes the formation of phosphodiester linkages between 5'-phosphoryl and 3'-hydroxyl groups in double-stranded DNA using NAD as a coenzyme and as the energy source for the reaction. It is essential for DNA replication and repair of damaged DNA. The chain is DNA ligase from Anaplasma marginale (strain Florida).